A 644-amino-acid polypeptide reads, in one-letter code: Sodium/hydrogen exchanger 9 (644 aa).

The Lumenal segment spans residues 1 to 20; the sequence is MAGQLRFTSGKDEDHFQHQG. The chain crosses the membrane as a helical span at residues 21-41; sequence AVELLAFNFLLILTILTIWLF. The Cytoplasmic portion of the chain corresponds to 42–45; sequence KNHR. Residues 46–66 traverse the membrane as a helical segment; it reads FRFLHETGGAMVYGLIMGLIL. Residues 67–126 lie on the Lumenal side of the membrane; the sequence is RYATAPTDIDSGTVYNCGNLFFSPSTLLVNITDQVYEYKYQREINQHNISPHQGNAILEK. The helical transmembrane segment at 127–147 threads the bilayer; sequence MTFDPEIFFNVLLPPIIFHAG. At 148–164 the chain is on the cytoplasmic side; the sequence is YSLKKRHFFQNLGSILT. Residues 165 to 185 form a helical membrane-spanning segment; the sequence is YAFLGTAISCVVIGLIMYGFV. The Lumenal segment spans residues 186–203; that stretch reads KAMVHAGQLKSGDFHFTD. A helical transmembrane segment spans residues 204–224; that stretch reads CLFFGSLMSATDPVTVLAIFH. The Cytoplasmic portion of the chain corresponds to 225–235; the sequence is ELHVDPDLYTL. The chain crosses the membrane as a helical span at residues 236–256; that stretch reads LFGESVLNDAVAIVLTYSISI. Residues 257 to 277 are Lumenal-facing; it reads YSPKENPNAFDTAAFFQSVGN. Residues 278-298 form a helical membrane-spanning segment; that stretch reads FLGIFAGSFAMGSAYAVVTAL. The Cytoplasmic segment spans residues 299–309; the sequence is LTKFTKLREFP. The helical transmembrane segment at 310 to 327 threads the bilayer; it reads MLETGLFFLLSWSAFLSA. Residues 328-333 are Lumenal-facing; that stretch reads EAAGLT. A helical transmembrane segment spans residues 334–350; it reads GIVAVLFCGVTQAHYTY. At 351–364 the chain is on the cytoplasmic side; it reads NNLSSDSKLRTKQL. Residues 365 to 385 traverse the membrane as a helical segment; the sequence is FEFMNFLAENVIFCYMGLALF. Thr-386 is a topological domain (lumenal). The chain crosses the membrane as a helical span at residues 387–407; the sequence is FQNHIFNALFILGAFLAIFVA. The Cytoplasmic segment spans residues 408–429; it reads RACNIYPLSFLLNLGRKQKIPW. Residues 430–450 form a helical membrane-spanning segment; that stretch reads NFQHMMMFSGLRGAIAFALAI. Residues 451–465 lie on the Lumenal side of the membrane; it reads RNTESQPKQMMFTTT. Residues 466–486 traverse the membrane as a helical segment; sequence LLLVFFTVWVFGGGTTPMLTW. The Cytoplasmic segment spans residues 487 to 644; sequence LQIRVGVDLD…EQTRGQPQMD (158 aa). Residues 590-644 are disordered; the sequence is YQEQSPSPSSPTTKLALDQKSSGQTPGKENIYEGDLGLGGYDLKLEQTRGQPQMD.

The protein belongs to the monovalent cation:proton antiporter 1 (CPA1) transporter (TC 2.A.36) family. As to quaternary structure, homodimer; phosphatidylinositol-4,5-bisphosphate (PIP2) and phosphatidylinositol 3,4,5-trisphosphate (PIP3) could be involved in the dimer stabilization. Interacts (via the C-terminus) with RACK1. Interacts with CHP1. In terms of tissue distribution, expressed in the brain. Highly expressed in immune cells, specifically macrophages.

It localises to the late endosome membrane. Its subcellular location is the cell membrane. The protein resides in the early endosome membrane. It is found in the recycling endosome membrane. The protein localises to the cytoplasmic vesicle. It localises to the phagosome membrane. The enzyme catalyses Na(+)(in) + H(+)(out) = Na(+)(out) + H(+)(in). It carries out the reaction K(+)(in) + H(+)(out) = K(+)(out) + H(+)(in). Functionally, endosomal Na(+), K(+)/H(+) antiporter. Mediates the electroneutral exchange of endosomal luminal H(+) for a cytosolic Na(+) or K(+). By facilitating proton efflux, SLC9A9 counteracts the acidity generated by vacuolar (V)-ATPase, thereby limiting luminal acidification. Regulates organellar pH and consequently, endosome maturation and endocytic trafficking of plasma membrane receptors and neurotransporters. Promotes the recycling of transferrin receptors back to the cell surface to facilitate additional iron uptake in the brain. Regulates synaptic transmission by regulating the luminal pH of axonal endosomes. Regulates phagosome lumenal pH, thus affecting phagosome maturation, and consequently, microbicidal activity in macrophages. Can also be active at the cell surface of specialized cells, e.g., in the inner ear hair bundles uses the high K(+) of the endolymph to regulate intracelular pH. The polypeptide is Sodium/hydrogen exchanger 9 (Slc9a9) (Mus musculus (Mouse)).